Reading from the N-terminus, the 370-residue chain is Adaptive-response sensory kinase SasA (370 aa).

Residues 152 to 365 form the Histidine kinase domain; it reads MVAHELRTPL…CFYLTVPVWQ (214 aa). His-155 carries the post-translational modification Phosphohistidine; by autocatalysis.

As to quaternary structure, homooligomerizes. Interacts with KaiC. Participates in the KaiBC complex, whose core is composed of a KaiC homohexamer and 6 KaiB.

The catalysed reaction is ATP + protein L-histidine = ADP + protein N-phospho-L-histidine.. Member of the two-component regulatory system SasA/RpaA involved in genome-wide circadian gene expression. One of several clock output pathways. Participates in the Kai clock protein complex, the main circadian regulator in cyanobacteria, via its interaction with KaiC. KaiC enhances the autophosphorylation activity of SasA, which then transfers its phosphate group to RpaA to activate it. In addition to its output function, recruits fold-shifted KaiB (KaiB(fs)) to KaiC to cooperatively form the KaiB(6):KaiC(6) complex (independent of SasA kinase activity). Required for robustness of the circadian rhythm of gene expression and is involved in clock output, also required for adaptation to light/dark cycles. In Prochlorococcus marinus (strain MIT 9303), this protein is Adaptive-response sensory kinase SasA.